The following is a 128-amino-acid chain: Large ribosomal subunit protein mL51 (128 aa).

The N-terminal 31 residues, 1–31 (MAGSVPWAASRRLWGWVPSACRSFSLGVPRL), are a transit peptide targeting the mitochondrion.

It belongs to the mitochondrion-specific ribosomal protein mL51 family. Component of the mitochondrial ribosome large subunit (39S) which comprises a 16S rRNA and about 50 distinct proteins. Interacts with OXA1L.

Its subcellular location is the mitochondrion. This chain is Large ribosomal subunit protein mL51 (Mrpl51), found in Mus musculus (Mouse).